A 422-amino-acid chain; its full sequence is Pre-B-cell leukemia transcription factor 2 (422 aa).

Positions 1–43 are disordered; the sequence is MDEQGRLMQARGVGIPGHPIHGGPQTLTPHPMHEPPADNGEPR. Basic and acidic residues predominate over residues 31–43; that stretch reads PMHEPPADNGEPR. The PBC domain occupies 42–236; it reads PRKQDIGDIL…VMILRSRFLD (195 aa). The tract at residues 49–128 is PBC-A; it reads DILQQIMTIT…EGVAGPEKGG (80 aa). The interval 131-236 is PBC-B; it reads AAAAAAAAAS…VMILRSRFLD (106 aa). The segment at residues 237–299 is a DNA-binding region (homeobox); the sequence is ARRKRRNFSK…NKRIRYKKNI (63 aa). Disordered regions lie at residues 319–341 and 353–422; these read QGGH…GSFN and QGLN…DTSN. The segment covering 401-410 has biased composition (polar residues); that stretch reads VTPSSVTSPT.

It belongs to the TALE/PBX homeobox family.

It is found in the nucleus. Its function is as follows. Transcriptional activator that binds the sequence 5'-ATCAATCAA-3'. This chain is Pre-B-cell leukemia transcription factor 2, found in Xenopus tropicalis (Western clawed frog).